A 134-amino-acid chain; its full sequence is uncharacterized protein (134 aa).

It is found in the mitochondrion. This is an uncharacterized protein from Saccharomyces cerevisiae (strain ATCC 204508 / S288c) (Baker's yeast).